Here is a 150-residue protein sequence, read N- to C-terminus: Glycophorin-A (150 aa).

A signal peptide spans 1 to 19; the sequence is MYGKIIFVLLLSEIVSISA. Topologically, residues 20-91 are extracellular; the sequence is LSTTEVAMHT…QLAHHFSEPE (72 aa). Residue S21 is glycosylated (O-linked (GalNAc...) serine). 3 O-linked (GalNAc...) threonine glycosylation sites follow: T22, T23, and T29. O-linked (GalNAc...) serine glycosylation occurs at S30. A glycan (O-linked (GalNAc...) threonine) is linked at T31. O-linked (GalNAc...) serine glycosylation is present at S32. An O-linked (GalNAc...) threonine glycan is attached at T36. O-linked (GalNAc...) serine glycosylation is found at S38 and S41. The O-linked (GalNAc...) threonine glycan is linked to T44. An N-linked (GlcNAc...) asparagine glycan is attached at N45. O-linked (GalNAc...) threonine glycans are attached at residues T52 and T56. S63 and S66 each carry an O-linked (GalNAc...) serine glycan. The O-linked (GalNAc...) threonine glycan is linked to T69. Residues 92-114 form a helical membrane-spanning segment; the sequence is ITLIIFGVMAGVIGTILLISYGI. The Cytoplasmic portion of the chain corresponds to 115-150; it reads RRLIKKSPSDVKPLPSPDTDVPLSSVEIENPETSDQ. Positions 121-150 are disordered; the sequence is SPSDVKPLPSPDTDVPLSSVEIENPETSDQ. At T133 the chain carries Phosphothreonine. Residues S138 and S148 each carry the phosphoserine modification.

The protein belongs to the glycophorin A family. As to quaternary structure, homodimer. Component of the ankyrin-1 complex in the erythrocyte, composed of ANK1, RHCE, RHAG, SLC4A1, EPB42, GYPA, GYPB and AQP1. Interacts with SLC4A1; a GYPA monomer is bound at each end of the SLC4A1 dimer forming a heterotetramer. In terms of assembly, (Microbial infection) Interacts with Streptococcus gordonii hsa protein. (Microbial infection) Interacts (in a sialic acid-independent manner) with P.falciparum MSP1 subunit p83. In terms of processing, the major O-linked glycan are NeuAc-alpha-(2-3)-Gal-beta-(1-3)-[NeuAc-alpha-(2-6)]-GalNAcOH (about 78 %) and NeuAc-alpha-(2-3)-Gal-beta-(1-3)-GalNAcOH (17 %). Minor O-glycans (5 %) include NeuAc-alpha-(2-3)-Gal-beta-(1-3)-[NeuAc-alpha-(2-6)]-GalNAcOH NeuAc-alpha-(2-8)-NeuAc-alpha-(2-3)-Gal-beta-(1-3)-GalNAcOH. About 1% of all O-linked glycans carry blood group A, B and H determinants. They derive from a type-2 precursor core structure, Gal-beta-(1,3)-GlcNAc-beta-1-R, and the antigens are synthesized by addition of fucose (H antigen-specific) and then N-acetylgalactosamine (A antigen-specific) or galactose (B antigen-specific). Specifically O-linked-glycans are NeuAc-alpha-(2-3)-Gal-beta-(1-3)-GalNAcOH-(6-1)-GlcNAc-beta-(4-1)-[Fuc-alpha-(1-2)]-Gal-beta-(3-1)-GalNAc-alpha (about 1%, B antigen-specific) and NeuAc-alpha-(2-3)-Gal-beta-(1-3)-GalNAcOH-(6-1)-GlcNAc-beta-(4-1)-[Fuc-alpha-(1-2)]-Gal-beta (1 %, O antigen-, A antigen- and B antigen-specific).

The protein localises to the cell membrane. Component of the ankyrin-1 complex, a multiprotein complex involved in the stability and shape of the erythrocyte membrane. Glycophorin A is the major intrinsic membrane protein of the erythrocyte. The N-terminal glycosylated segment, which lies outside the erythrocyte membrane, has MN blood group receptors. Appears to be important for the function of SLC4A1 and is required for high activity of SLC4A1. May be involved in translocation of SLC4A1 to the plasma membrane. In terms of biological role, (Microbial infection) Appears to be a receptor for Hepatitis A virus (HAV). Its function is as follows. (Microbial infection) Receptor for P.falciparum erythrocyte-binding antigen 175 (EBA-175); binding of EBA-175 is dependent on sialic acid residues of the O-linked glycans. This is Glycophorin-A from Homo sapiens (Human).